Reading from the N-terminus, the 233-residue chain is tRNA (guanine-N(7)-)-methyltransferase (233 aa).

The interval 1–22 (MIDENHPMRAAGNFFGRRHGKP) is disordered. Glu64, Glu89, Asp116, and Asp138 together coordinate S-adenosyl-L-methionine. Residue Asp138 is part of the active site. Substrate is bound by residues Lys142, Asp174, and 212-215 (TRYE).

This sequence belongs to the class I-like SAM-binding methyltransferase superfamily. TrmB family.

It carries out the reaction guanosine(46) in tRNA + S-adenosyl-L-methionine = N(7)-methylguanosine(46) in tRNA + S-adenosyl-L-homocysteine. It participates in tRNA modification; N(7)-methylguanine-tRNA biosynthesis. Catalyzes the formation of N(7)-methylguanine at position 46 (m7G46) in tRNA. The polypeptide is tRNA (guanine-N(7)-)-methyltransferase (Brucella abortus (strain 2308)).